Consider the following 219-residue polypeptide: Pyridoxine/pyridoxamine 5'-phosphate oxidase (219 aa).

Substrate is bound by residues Arg13–Tyr16 and Lys76. Residues Arg71 to Lys76, Phe86 to Thr87, Lys93, and Gln115 each bind FMN. Tyr133, Arg137, and Ser141 together coordinate substrate. FMN is bound by residues Gln150–Ser151 and Trp196. Position 202-204 (Arg202–His204) interacts with substrate. Residue Arg206 coordinates FMN.

The protein belongs to the pyridoxamine 5'-phosphate oxidase family. In terms of assembly, homodimer. FMN serves as cofactor.

The enzyme catalyses pyridoxamine 5'-phosphate + O2 + H2O = pyridoxal 5'-phosphate + H2O2 + NH4(+). It carries out the reaction pyridoxine 5'-phosphate + O2 = pyridoxal 5'-phosphate + H2O2. It participates in cofactor metabolism; pyridoxal 5'-phosphate salvage; pyridoxal 5'-phosphate from pyridoxamine 5'-phosphate: step 1/1. Its pathway is cofactor metabolism; pyridoxal 5'-phosphate salvage; pyridoxal 5'-phosphate from pyridoxine 5'-phosphate: step 1/1. Catalyzes the oxidation of either pyridoxine 5'-phosphate (PNP) or pyridoxamine 5'-phosphate (PMP) into pyridoxal 5'-phosphate (PLP). In Mycobacterium leprae (strain TN), this protein is Pyridoxine/pyridoxamine 5'-phosphate oxidase.